The primary structure comprises 198 residues: Ribonuclease HII (198 aa).

An RNase H type-2 domain is found at 2–191 (VLECGVDETG…IRELLVGKDN (190 aa)). Asp8, Glu9, and Asp100 together coordinate a divalent metal cation.

Belongs to the RNase HII family. Mn(2+) serves as cofactor. Mg(2+) is required as a cofactor.

It localises to the cytoplasm. The enzyme catalyses Endonucleolytic cleavage to 5'-phosphomonoester.. In terms of biological role, endonuclease that specifically degrades the RNA of RNA-DNA hybrids. The polypeptide is Ribonuclease HII (Desulforamulus reducens (strain ATCC BAA-1160 / DSM 100696 / MI-1) (Desulfotomaculum reducens)).